The sequence spans 245 residues: tRNA pseudouridine synthase A (245 aa).

Catalysis depends on aspartate 52, which acts as the Nucleophile. Tyrosine 111 provides a ligand contact to substrate.

It belongs to the tRNA pseudouridine synthase TruA family. In terms of assembly, homodimer.

It catalyses the reaction uridine(38/39/40) in tRNA = pseudouridine(38/39/40) in tRNA. In terms of biological role, formation of pseudouridine at positions 38, 39 and 40 in the anticodon stem and loop of transfer RNAs. The polypeptide is tRNA pseudouridine synthase A (Rickettsia rickettsii (strain Iowa)).